A 123-amino-acid chain; its full sequence is Small ribosomal subunit protein uS13 (123 aa).

The segment at 94–123 (GLPVRGQSTKSNARTRKGPRKTVAGKKSTK) is disordered. Residues 106–123 (ARTRKGPRKTVAGKKSTK) show a composition bias toward basic residues.

The protein belongs to the universal ribosomal protein uS13 family. In terms of assembly, part of the 30S ribosomal subunit. Forms a loose heterodimer with protein S19. Forms two bridges to the 50S subunit in the 70S ribosome.

In terms of biological role, located at the top of the head of the 30S subunit, it contacts several helices of the 16S rRNA. In the 70S ribosome it contacts the 23S rRNA (bridge B1a) and protein L5 of the 50S subunit (bridge B1b), connecting the 2 subunits; these bridges are implicated in subunit movement. Contacts the tRNAs in the A and P-sites. The chain is Small ribosomal subunit protein uS13 from Mycoplasmopsis agalactiae (strain NCTC 10123 / CIP 59.7 / PG2) (Mycoplasma agalactiae).